The following is a 70-amino-acid chain: Small ribosomal subunit protein bS21 (70 aa).

The protein belongs to the bacterial ribosomal protein bS21 family.

The sequence is that of Small ribosomal subunit protein bS21 from Campylobacter fetus subsp. fetus (strain 82-40).